A 139-amino-acid polypeptide reads, in one-letter code: Putative translationally-controlled tumor protein-like protein TPT1P8 (139 aa).

Positions 1 to 139 (MIIFQDLISH…KTTSSLLVKT (139 aa)) constitute a TCTP domain. Over residues 40–51 (TGNTDDSLIGRN) the composition is skewed to polar residues. Residues 40 to 60 (TGNTDDSLIGRNSSSESTEDE) form a disordered region.

It belongs to the TCTP family.

The sequence is that of Putative translationally-controlled tumor protein-like protein TPT1P8 (TPT1P8) from Homo sapiens (Human).